The sequence spans 461 residues: Cytochrome c biogenesis protein CcsB (461 aa).

3 consecutive transmembrane segments (helical) span residues 32-52 (LRLA…GTVI), 91-111 (TWWF…CTFT), and 178-198 (IGPI…IWGA).

This sequence belongs to the Ccs1/CcsB family. May interact with CcsA.

It is found in the cellular thylakoid membrane. In terms of biological role, required during biogenesis of c-type cytochromes (cytochrome c6 and cytochrome f) at the step of heme attachment. The protein is Cytochrome c biogenesis protein CcsB of Nostoc sp. (strain PCC 7120 / SAG 25.82 / UTEX 2576).